A 360-amino-acid polypeptide reads, in one-letter code: BLOC-1-related complex subunit 6 (360 aa).

The segment at 1–201 is disordered; the sequence is MEAAQGRLGP…TGAGGGRRAT (201 aa). Residues 23–33 are compositionally biased toward polar residues; sequence ATFSGRPSRTP. Residue threonine 41 is modified to Phosphothreonine. Serine 130 is subject to Phosphoserine. The segment covering 144–155 has biased composition (acidic residues); it reads EGDDDDDEDEEA. Serine 173 is modified (phosphoserine). The span at 179–198 shows a compositional bias: gly residues; sequence GACGGGGSSSSGETGAGGGR. Threonine 201 carries the phosphothreonine modification. Position 204 is a phosphoserine (serine 204).

This sequence belongs to the BORCS6 family. In terms of assembly, component of the BLOC-one-related complex (BORC) which is composed of BLOC1S1, BLOC1S2, BORCS5, BORCS6, BORCS7, BORCS8, KXD1 and SNAPIN.

It is found in the lysosome membrane. As part of the BORC complex may play a role in lysosomes movement and localization at the cell periphery. Associated with the cytosolic face of lysosomes, the BORC complex may recruit ARL8B and couple lysosomes to microtubule plus-end-directed kinesin motor. The chain is BLOC-1-related complex subunit 6 from Mus musculus (Mouse).